We begin with the raw amino-acid sequence, 184 residues long: Thymidine kinase (184 aa).

Residues 10–17 (GPMYSGKT), His-53, and 83–86 (DEVQ) each bind ATP. Glu-84 acts as the Proton acceptor in catalysis. His-115 contributes to the substrate binding site. Zn(2+) contacts are provided by Cys-140 and Cys-143. Substrate-binding positions include 161-164 (IDVG) and Tyr-169. Zn(2+) is bound by residues Cys-173 and Cys-176.

Belongs to the thymidine kinase family. Homotetramer.

The protein localises to the cytoplasm. The catalysed reaction is thymidine + ATP = dTMP + ADP + H(+). This Thermotoga maritima (strain ATCC 43589 / DSM 3109 / JCM 10099 / NBRC 100826 / MSB8) protein is Thymidine kinase (tdk).